Consider the following 232-residue polypeptide: Ribonuclease 3 (232 aa).

The region spanning 6–133 (LKEIEENLGV…IIAAVYLDKG (128 aa)) is the RNase III domain. E46 is a binding site for Mg(2+). Residue D50 is part of the active site. Residues D119 and E122 each coordinate Mg(2+). E122 is an active-site residue. The 70-residue stretch at 160 to 229 (DFKTKLQELL…AKQALDILEG (70 aa)) folds into the DRBM domain.

It belongs to the ribonuclease III family. In terms of assembly, homodimer. Requires Mg(2+) as cofactor.

Its subcellular location is the cytoplasm. The enzyme catalyses Endonucleolytic cleavage to 5'-phosphomonoester.. Its function is as follows. Digests double-stranded RNA. Involved in the processing of primary rRNA transcript to yield the immediate precursors to the large and small rRNAs (23S and 16S). Processes some mRNAs, and tRNAs when they are encoded in the rRNA operon. Processes pre-crRNA and tracrRNA of type II CRISPR loci if present in the organism. The sequence is that of Ribonuclease 3 from Clostridium beijerinckii (strain ATCC 51743 / NCIMB 8052) (Clostridium acetobutylicum).